We begin with the raw amino-acid sequence, 230 residues long: Pyridoxal phosphate homeostasis protein (230 aa).

Residue Lys-36 is modified to N6-(pyridoxal phosphate)lysine.

This sequence belongs to the pyridoxal phosphate-binding protein YggS/PROSC family.

In terms of biological role, perhaps involved in proline biosynthesis. Its function is as follows. Pyridoxal 5'-phosphate (PLP)-binding protein, which is involved in PLP homeostasis. In Pseudomonas aeruginosa (strain ATCC 15692 / DSM 22644 / CIP 104116 / JCM 14847 / LMG 12228 / 1C / PRS 101 / PAO1), this protein is Pyridoxal phosphate homeostasis protein.